The primary structure comprises 639 residues: Pheromone B alpha 1 receptor (639 aa).

The next 7 membrane-spanning stretches (helical) occupy residues 8 to 28 (LFPIFAFLGFVLAILPLPWHL), 37 to 57 (FFMMWTALGCLNQFINSVAWA), 70 to 90 (ISIRILMGASVGIPASSLCII), 113 to 133 (ILVDALICVLFPLVYIALQYI), 163 to 183 (VWPVLLGLISATYGVMALLQF), 209 to 229 (MALALTEMMCTMPLGIFVIVL), and 272 to 292 (LTRWCAPVSAFIFFFYFGFAE). Disordered stretches follow at residues 375 to 416 (PRPM…SSPI), 490 to 516 (TVPHHSTADEPASPALPDTPSSCSSSA), 532 to 563 (SADVTRRDSGSSAGGVASTSRPTRAGPPRLPS), and 611 to 639 (TTAGAPATTTPDRGEPDVPTSPRTHRASV). The segment covering 383–398 (SSSGFSSSDSTRFGSS) has biased composition (low complexity). Low complexity-rich tracts occupy residues 541–551 (GSSAGGVASTS) and 611–621 (TTAGAPATTTP).

It belongs to the G-protein coupled receptor 4 family.

It is found in the membrane. Its function is as follows. Receptor for the BAP1 pheromone, a prenylated mating factor. Has a role in the initiation of B-regulated nuclear migration. The chain is Pheromone B alpha 1 receptor (BAR1) from Schizophyllum commune (Split gill fungus).